A 413-amino-acid chain; its full sequence is Protein MANNAN SYNTHESIS-RELATED (413 aa).

Over 1–5 (MNSME) the chain is Cytoplasmic. A helical; Signal-anchor for type II membrane protein transmembrane segment spans residues 6–26 (IRQAFAGLLTLSMFIMLGNMI). At 27-413 (KKDHFDYPAE…KNHLAYKCFC (387 aa)) the chain is on the lumenal side. The N-linked (GlcNAc...) asparagine glycan is linked to Asn207. Substrate is bound at residue 255–257 (DLR).

It belongs to the glycosyltransferase GT106 family. As to expression, highly and specifically expressed in the endosperm.

The protein resides in the golgi apparatus membrane. The protein operates within glycan biosynthesis. Glycosyltransferase involved in mannan biosynthesis. The sequence is that of Protein MANNAN SYNTHESIS-RELATED from Trigonella foenum-graecum (Fenugreek).